The following is a 637-amino-acid chain: 1-deoxy-D-xylulose-5-phosphate synthase (637 aa).

Thiamine diphosphate is bound by residues His-73 and 113-115 (SHA). Position 145 (Asp-145) interacts with Mg(2+). Thiamine diphosphate-binding positions include 146 to 147 (GA), Asn-175, Tyr-286, and Glu-367. Residue Asn-175 participates in Mg(2+) binding.

Belongs to the transketolase family. DXPS subfamily. Homodimer. Requires Mg(2+) as cofactor. The cofactor is thiamine diphosphate.

It carries out the reaction D-glyceraldehyde 3-phosphate + pyruvate + H(+) = 1-deoxy-D-xylulose 5-phosphate + CO2. It functions in the pathway metabolic intermediate biosynthesis; 1-deoxy-D-xylulose 5-phosphate biosynthesis; 1-deoxy-D-xylulose 5-phosphate from D-glyceraldehyde 3-phosphate and pyruvate: step 1/1. Functionally, catalyzes the acyloin condensation reaction between C atoms 2 and 3 of pyruvate and glyceraldehyde 3-phosphate to yield 1-deoxy-D-xylulose-5-phosphate (DXP). This chain is 1-deoxy-D-xylulose-5-phosphate synthase, found in Thermobifida fusca (strain YX).